Consider the following 174-residue polypeptide: Ribosome maturation factor RimM (174 aa).

In terms of domain architecture, PRC barrel spans 98–171 (EDEFYFHEII…KIKIHVMEGL (74 aa)).

Belongs to the RimM family. In terms of assembly, binds ribosomal protein uS19.

It localises to the cytoplasm. Its function is as follows. An accessory protein needed during the final step in the assembly of 30S ribosomal subunit, possibly for assembly of the head region. Essential for efficient processing of 16S rRNA. May be needed both before and after RbfA during the maturation of 16S rRNA. It has affinity for free ribosomal 30S subunits but not for 70S ribosomes. This chain is Ribosome maturation factor RimM, found in Bacillus velezensis (strain DSM 23117 / BGSC 10A6 / LMG 26770 / FZB42) (Bacillus amyloliquefaciens subsp. plantarum).